We begin with the raw amino-acid sequence, 439 residues long: Probable glycine dehydrogenase (decarboxylating) subunit 1 (439 aa).

The protein belongs to the GcvP family. N-terminal subunit subfamily. The glycine cleavage system is composed of four proteins: P, T, L and H. In this organism, the P 'protein' is a heterodimer of two subunits.

It catalyses the reaction N(6)-[(R)-lipoyl]-L-lysyl-[glycine-cleavage complex H protein] + glycine + H(+) = N(6)-[(R)-S(8)-aminomethyldihydrolipoyl]-L-lysyl-[glycine-cleavage complex H protein] + CO2. Its function is as follows. The glycine cleavage system catalyzes the degradation of glycine. The P protein binds the alpha-amino group of glycine through its pyridoxal phosphate cofactor; CO(2) is released and the remaining methylamine moiety is then transferred to the lipoamide cofactor of the H protein. This Aquifex aeolicus (strain VF5) protein is Probable glycine dehydrogenase (decarboxylating) subunit 1.